A 312-amino-acid chain; its full sequence is Light-independent protochlorophyllide reductase iron-sulfur ATP-binding protein (312 aa).

ATP is bound by residues 55–60 (GIGKST) and lysine 84. Mg(2+) is bound at residue serine 59. [4Fe-4S] cluster-binding residues include cysteine 140 and cysteine 174. ATP-binding positions include 225 to 226 (NR) and 249 to 251 (PDL).

This sequence belongs to the NifH/BchL/ChlL family. In terms of assembly, homodimer. Protochlorophyllide reductase is composed of three subunits; BchL, BchN and BchB. [4Fe-4S] cluster serves as cofactor.

The catalysed reaction is chlorophyllide a + oxidized 2[4Fe-4S]-[ferredoxin] + 2 ADP + 2 phosphate = protochlorophyllide a + reduced 2[4Fe-4S]-[ferredoxin] + 2 ATP + 2 H2O. It functions in the pathway porphyrin-containing compound metabolism; bacteriochlorophyll biosynthesis (light-independent). Functionally, component of the dark-operative protochlorophyllide reductase (DPOR) that uses Mg-ATP and reduced ferredoxin to reduce ring D of protochlorophyllide (Pchlide) to form chlorophyllide a (Chlide). This reaction is light-independent. The L component serves as a unique electron donor to the NB-component of the complex, and binds Mg-ATP. The polypeptide is Light-independent protochlorophyllide reductase iron-sulfur ATP-binding protein (Rhodopseudomonas palustris (strain ATCC BAA-98 / CGA009)).